The following is a 380-amino-acid chain: Cytochrome b (380 aa).

4 helical membrane-spanning segments follow: residues 28–48, 72–93, 109–129, and 174–194; these read IGSL…FLSL, WLVR…YAHI, WLVG…GYVL, and FYSF…VHLL. Heme b contacts are provided by H78 and H92. Heme b is bound by residues H178 and H192. H197 serves as a coordination point for a ubiquinone. The next 4 helical transmembrane spans lie at 222–243, 285–305, 317–337, and 344–364; these read WKIL…CYIT, IGGV…PLAL, IGQL…WLGA, and YISL…LYMI.

This sequence belongs to the cytochrome b family. In terms of assembly, the main subunits of complex b-c1 are: cytochrome b, cytochrome c1 and the Rieske protein. It depends on heme b as a cofactor.

It localises to the mitochondrion inner membrane. Its function is as follows. Component of the ubiquinol-cytochrome c reductase complex (complex III or cytochrome b-c1 complex) that is part of the mitochondrial respiratory chain. The b-c1 complex mediates electron transfer from ubiquinol to cytochrome c. Contributes to the generation of a proton gradient across the mitochondrial membrane that is then used for ATP synthesis. The chain is Cytochrome b (MT-CYB) from Cepaea nemoralis (Banded wood snail).